The sequence spans 450 residues: Regulator of sigma-E protease RseP (450 aa).

The helical transmembrane segment at 1 to 21 (MLSFLWDLASFIVALGVLITV) threads the bilayer. Zn(2+) is bound at residue histidine 22. Residues 22–103 (HEFGHFWVAR…VGQRAAIIAA (82 aa)) are Periplasmic-facing. Glutamate 23 is a catalytic residue. Histidine 26 serves as a coordination point for Zn(2+). The helical transmembrane segment at 104–124 (GPVANFIFAIFAYWLVFIIGV) threads the bilayer. At 125 to 375 (PGVRPVVGEI…KGAGMTAELG (251 aa)) the chain is on the cytoplasmic side. PDZ domains are found at residues 127–220 (VRPV…PRGP) and 222–309 (IEPV…PKVI). The helical transmembrane segment at 376–396 (VVYYLPFLALISVNLGIINLF) threads the bilayer. Topologically, residues 397-429 (PLPVLDGGHLLFLAIEKIKGGPVSERVQDFCYR) are periplasmic. Residues 430–450 (IGSILLVLLMGLALFNDFSRL) form a helical membrane-spanning segment.

This sequence belongs to the peptidase M50B family. In terms of assembly, interacts with RseA; the third transmembrane domain can be cross-linked to the transmembrane domain of RseA. Zn(2+) is required as a cofactor.

The protein resides in the cell inner membrane. Inhibited by Zn(2+) chelator 1,10-phenanthroline. A site-2 regulated intramembrane protease (S2P) that cleaves the peptide bond between 'Ala-108' and 'Cys-109' in the transmembrane region of RseA. Part of a regulated intramembrane proteolysis (RIP) cascade. Acts on DegS-cleaved RseA to release the cytoplasmic domain of RseA, residue 'Val-148' of RseA may be required for this. This provides the cell with sigma-E (RpoE) activity through the proteolysis of RseA. Can also cleave sequences in transmembrane regions of other proteins (such as LacY) as well as liberated signal peptides of beta-lactamase, OmpF, LivK, SecM, PhoA, LivJ, OmpC, Lpp and TorA, probably within the membrane. Cleaves FecR within its transmembrane region to release an N-terminal cytoplasmic fragment which binds to sigma factor FecI, allowing it to activate transcription of the fecABCDE operon which mediates ferric citrate transport. This chain is Regulator of sigma-E protease RseP (rseP), found in Escherichia coli (strain K12).